Here is a 189-residue protein sequence, read N- to C-terminus: Small heat shock protein 21 (189 aa).

The segment at 26-53 is disordered; the sequence is PPNFNPRKIAQGDNGKGQQVSRYGAGAG. The sHSP domain maps to 77 to 183; it reads KYFVGFDDNV…HEKIVNIPIS (107 aa).

This sequence belongs to the small heat shock protein (HSP20) family.

Its function is as follows. Heat shock protein required for pathogenicity. Mediates thermotolerance and adaptation to oxidative stress and ethanol-induced stress. Required for invasive growth and filament formation under various filament inducing conditions. Plays a role in the capacity of damaging human-derived endothelial and oral epithelial cells during infection. Potentiates resistance to antifungal drugs, as well as resistance to killing by human neutrophils. Plays a major role in trehalose homeostasis in response to elevated temperatures. Regulates CEK1 activation by phosphorylation in response to elevated temperatures. This Candida albicans (strain SC5314 / ATCC MYA-2876) (Yeast) protein is Small heat shock protein 21 (HSP21).